The primary structure comprises 489 residues: Aspartyl/glutamyl-tRNA(Asn/Gln) amidotransferase subunit B (489 aa).

This sequence belongs to the GatB/GatE family. GatB subfamily. As to quaternary structure, heterotrimer of A, B and C subunits.

It catalyses the reaction L-glutamyl-tRNA(Gln) + L-glutamine + ATP + H2O = L-glutaminyl-tRNA(Gln) + L-glutamate + ADP + phosphate + H(+). It carries out the reaction L-aspartyl-tRNA(Asn) + L-glutamine + ATP + H2O = L-asparaginyl-tRNA(Asn) + L-glutamate + ADP + phosphate + 2 H(+). Its function is as follows. Allows the formation of correctly charged Asn-tRNA(Asn) or Gln-tRNA(Gln) through the transamidation of misacylated Asp-tRNA(Asn) or Glu-tRNA(Gln) in organisms which lack either or both of asparaginyl-tRNA or glutaminyl-tRNA synthetases. The reaction takes place in the presence of glutamine and ATP through an activated phospho-Asp-tRNA(Asn) or phospho-Glu-tRNA(Gln). This is Aspartyl/glutamyl-tRNA(Asn/Gln) amidotransferase subunit B from Polynucleobacter asymbioticus (strain DSM 18221 / CIP 109841 / QLW-P1DMWA-1) (Polynucleobacter necessarius subsp. asymbioticus).